The primary structure comprises 260 residues: Indole-3-glycerol phosphate synthase (260 aa).

The protein belongs to the TrpC family.

It catalyses the reaction 1-(2-carboxyphenylamino)-1-deoxy-D-ribulose 5-phosphate + H(+) = (1S,2R)-1-C-(indol-3-yl)glycerol 3-phosphate + CO2 + H2O. It functions in the pathway amino-acid biosynthesis; L-tryptophan biosynthesis; L-tryptophan from chorismate: step 4/5. The polypeptide is Indole-3-glycerol phosphate synthase (Chloroherpeton thalassium (strain ATCC 35110 / GB-78)).